A 307-amino-acid polypeptide reads, in one-letter code: Serine/threonine-protein phosphatase 4 catalytic subunit (307 aa).

Alanine 2 carries the post-translational modification N-acetylalanine. Aspartate 54, histidine 56, aspartate 82, and asparagine 114 together coordinate Mn(2+). The Proton donor role is filled by histidine 115. Histidine 164 and histidine 238 together coordinate Mn(2+). Leucine 307 carries the leucine methyl ester modification.

The protein belongs to the PPP phosphatase family. PP-4 (PP-X) subfamily. Serine/threonine-protein phosphatase 4 (PP4) occurs in different assemblies of the catalytic and one or more regulatory subunits. Component of the PP4 complexes PPP4C-PPP4R1, PPP4C-PPP4R2, PPP4C-PPP4R2-PPP4R3A, PPP4C-PPP4R2-PPP4R3B and PPP4C-PPP4R4. The PPP4C-PPP4R2 complex appears to be a tetramer composed of 2 molecules of PPP4C and 2 molecules of PPP4R2. Interacts with REL, NFKB1/p50 and RELA. Interacts with SMN1 and GEMIN4. Interacts with IRS4 (phosphorylated). Interacts with SMEK1/PPP4R3A; the interaction requires PP4R2. Interacts with HDAC3. It depends on Mn(2+) as a cofactor. Post-translationally, methylation at the C-terminal Leu-307 is critical for interactions with regulatory subunits and functions in DNA repair.

The protein localises to the cytoplasm. It is found in the nucleus. It localises to the cytoskeleton. Its subcellular location is the microtubule organizing center. The protein resides in the centrosome. It catalyses the reaction O-phospho-L-seryl-[protein] + H2O = L-seryl-[protein] + phosphate. It carries out the reaction O-phospho-L-threonyl-[protein] + H2O = L-threonyl-[protein] + phosphate. Functionally, protein phosphatase that is involved in many processes such as microtubule organization at centrosomes, maturation of spliceosomal snRNPs, apoptosis, DNA repair, tumor necrosis factor (TNF)-alpha signaling, activation of c-Jun N-terminal kinase MAPK8, regulation of histone acetylation, DNA damage checkpoint signaling, NF-kappa-B activation and cell migration. The PPP4C-PPP4R1 PP4 complex may play a role in dephosphorylation and regulation of HDAC3. The PPP4C-PPP4R2-PPP4R3A PP4 complex specifically dephosphorylates H2AX phosphorylated on Ser-140 (gamma-H2AX) generated during DNA replication and required for DNA DSB repair. Dephosphorylates NDEL1 at CDK1 phosphorylation sites and negatively regulates CDK1 activity in interphase. In response to DNA damage, catalyzes RPA2 dephosphorylation, an essential step for DNA repair since it allows the efficient RPA2-mediated recruitment of RAD51 to chromatin. The chain is Serine/threonine-protein phosphatase 4 catalytic subunit (Ppp4c) from Rattus norvegicus (Rat).